A 182-amino-acid polypeptide reads, in one-letter code: Adenine phosphoribosyltransferase (182 aa).

It belongs to the purine/pyrimidine phosphoribosyltransferase family. In terms of assembly, homodimer.

The protein localises to the cytoplasm. It catalyses the reaction AMP + diphosphate = 5-phospho-alpha-D-ribose 1-diphosphate + adenine. It participates in purine metabolism; AMP biosynthesis via salvage pathway; AMP from adenine: step 1/1. In terms of biological role, catalyzes a salvage reaction resulting in the formation of AMP, that is energically less costly than de novo synthesis. In Stutzerimonas stutzeri (strain A1501) (Pseudomonas stutzeri), this protein is Adenine phosphoribosyltransferase.